We begin with the raw amino-acid sequence, 410 residues long: MRSEERQLNLFGTSVNWSWPNLFKEREAPGMQLYDRALLFAVLSLICFGFVMVMSASMPEAQSLTGNPYHFAIRHFAYLVGCAVIAAVVLRIEMSRWQQFSPLLLLIVGIMLVAVLLVGTSVNGATRWLSVGPIRIQVAELAKFAFTIYMAGYLVRRHQEIRENAKGFYKPIAVFAVYAFLILMQPDLGTVVVLFVGTVGLLFLAGARLLDFFALILTGVMAFVALVLLEPYRMRRVTSFMDPWQDPFGSGYQLTQSLMAYGRGDWFGQGLGNSIQKLEYLPEAHTDFIFAVIGEELGFIGIVVVLSVLLFVALRAIKLGNLCIEIDKPFEGYLAYAIGIWFCFQTVVNVGASIGMLPTKGLTLPFISYGGSSLWVMTAAAMILIRIDHERRLSSIQAVQGKKVNDNREY.

At 1–37 the chain is on the cytoplasmic side; the sequence is MRSEERQLNLFGTSVNWSWPNLFKEREAPGMQLYDRA. A helical membrane pass occupies residues 38–58; the sequence is LLFAVLSLICFGFVMVMSASM. Topologically, residues 59-69 are periplasmic; that stretch reads PEAQSLTGNPY. A helical membrane pass occupies residues 70 to 90; the sequence is HFAIRHFAYLVGCAVIAAVVL. Over 91–99 the chain is Cytoplasmic; the sequence is RIEMSRWQQ. Residues 100-120 form a helical membrane-spanning segment; the sequence is FSPLLLLIVGIMLVAVLLVGT. Residues 121–131 are Periplasmic-facing; sequence SVNGATRWLSV. A helical transmembrane segment spans residues 132–154; it reads GPIRIQVAELAKFAFTIYMAGYL. The Cytoplasmic segment spans residues 155 to 163; the sequence is VRRHQEIRE. A helical membrane pass occupies residues 164–184; it reads NAKGFYKPIAVFAVYAFLILM. Over 185-186 the chain is Periplasmic; sequence QP. The chain crosses the membrane as a helical span at residues 187-207; it reads DLGTVVVLFVGTVGLLFLAGA. Residue R208 is a topological domain, cytoplasmic. A helical transmembrane segment spans residues 209 to 229; the sequence is LLDFFALILTGVMAFVALVLL. The Periplasmic portion of the chain corresponds to 230–291; it reads EPYRMRRVTS…PEAHTDFIFA (62 aa). Residues 292 to 312 form a helical membrane-spanning segment; the sequence is VIGEELGFIGIVVVLSVLLFV. At 313 to 336 the chain is on the cytoplasmic side; sequence ALRAIKLGNLCIEIDKPFEGYLAY. A helical membrane pass occupies residues 337–357; it reads AIGIWFCFQTVVNVGASIGML. Residues 358-364 lie on the Periplasmic side of the membrane; the sequence is PTKGLTL. Residues 365-385 traverse the membrane as a helical segment; it reads PFISYGGSSLWVMTAAAMILI. Residues 386-410 lie on the Cytoplasmic side of the membrane; it reads RIDHERRLSSIQAVQGKKVNDNREY.

It belongs to the SEDS family. FtsW subfamily.

The protein resides in the cell inner membrane. The catalysed reaction is [GlcNAc-(1-&gt;4)-Mur2Ac(oyl-L-Ala-gamma-D-Glu-L-Lys-D-Ala-D-Ala)](n)-di-trans,octa-cis-undecaprenyl diphosphate + beta-D-GlcNAc-(1-&gt;4)-Mur2Ac(oyl-L-Ala-gamma-D-Glu-L-Lys-D-Ala-D-Ala)-di-trans,octa-cis-undecaprenyl diphosphate = [GlcNAc-(1-&gt;4)-Mur2Ac(oyl-L-Ala-gamma-D-Glu-L-Lys-D-Ala-D-Ala)](n+1)-di-trans,octa-cis-undecaprenyl diphosphate + di-trans,octa-cis-undecaprenyl diphosphate + H(+). It functions in the pathway cell wall biogenesis; peptidoglycan biosynthesis. Peptidoglycan polymerase that is essential for cell division. This is Probable peptidoglycan glycosyltransferase FtsW from Shewanella sediminis (strain HAW-EB3).